Here is a 298-residue protein sequence, read N- to C-terminus: uncharacterized protein (298 aa).

The tract at residues 264–298 (APPPPLPCITTGPAALEDSPKASKANKGKKAKAKK) is disordered. Positions 287–298 (KANKGKKAKAKK) are enriched in basic residues.

This is an uncharacterized protein from Mus musculus (Mouse).